A 71-amino-acid chain; its full sequence is Translational regulator CsrA (71 aa).

The segment at 50–71 (RIRHEKDGDVPEAAPGQGADPQ) is disordered.

The protein belongs to the CsrA/RsmA family. In terms of assembly, homodimer; the beta-strands of each monomer intercalate to form a hydrophobic core, while the alpha-helices form wings that extend away from the core.

It localises to the cytoplasm. A key translational regulator that binds mRNA to regulate translation initiation and/or mRNA stability. Mediates global changes in gene expression, shifting from rapid growth to stress survival by linking envelope stress, the stringent response and the catabolite repression systems. Usually binds in the 5'-UTR; binding at or near the Shine-Dalgarno sequence prevents ribosome-binding, repressing translation, binding elsewhere in the 5'-UTR can activate translation and/or stabilize the mRNA. Its function is antagonized by small RNA(s). The sequence is that of Translational regulator CsrA from Halorhodospira halophila (strain DSM 244 / SL1) (Ectothiorhodospira halophila (strain DSM 244 / SL1)).